A 517-amino-acid polypeptide reads, in one-letter code: Transcription factor MTB3 (517 aa).

Positions Gly290–Asn331 are disordered. A compositionally biased stretch (basic and acidic residues) spans Arg297–Lys314. The segment at Glu327 to Arg340 is basic motif; degenerate. Positions Glu327–Leu376 constitute a bHLH domain. Residues Glu341–Leu376 form a helix-loop-helix motif region.

It is found in the nucleus. Transcription factor that negatively regulates jasmonate (JA) signaling. Negatively regulates JA-dependent response to wounding, JA-induced expression of defense genes, JA-dependent responses against herbivorous insects, and JA-dependent resistance against Botrytis cinerea infection. Plays a positive role in resistance against the bacterial pathogen Pseudomonas syringae pv tomato DC3000. The sequence is that of Transcription factor MTB3 from Solanum lycopersicum (Tomato).